The sequence spans 135 residues: Large ribosomal subunit protein bL21 (135 aa).

The tract at residues 85–135 (YRVKRGHRQQYTQIEIESLNANGPASSDDEEAAETSDAEPDEDPEAEPAEA) is disordered. Positions 93–107 (QQYTQIEIESLNANG) are enriched in polar residues. Positions 111 to 135 (SDDEEAAETSDAEPDEDPEAEPAEA) are enriched in acidic residues.

This sequence belongs to the bacterial ribosomal protein bL21 family. As to quaternary structure, part of the 50S ribosomal subunit. Contacts protein L20.

This protein binds to 23S rRNA in the presence of protein L20. The polypeptide is Large ribosomal subunit protein bL21 (Salinibacter ruber (strain DSM 13855 / M31)).